We begin with the raw amino-acid sequence, 296 residues long: Remorin 4.1 (296 aa).

Disordered stretches follow at residues 1-78 (MLTL…SGEN), 121-142 (TRIG…DSNP), and 242-266 (EKTQ…EGKR). Residues 21 to 39 (ASDRRDETPSSEIVVRDIH) show a composition bias toward basic and acidic residues. Polar residues-rich tracts occupy residues 41–53 (MTTT…PQQR) and 62–78 (PSRS…SGEN). 2 stretches are compositionally biased toward basic and acidic residues: residues 121–135 (TRIG…HGQV) and 253–266 (RKAE…EGKR). A coiled-coil region spans residues 226-261 (MKKIERKLEDRRAKAMEKTQNKVAKAQRKAEERRAT).

This sequence belongs to the remorin family. Forms homodimer and heterodimer with REM4.2. Interacts with KIN11. Post-translationally, phosphorylated by KIN11. Probably ubiquitinated and degraded by the 26S proteasome pathway. Predominantly detected in bud, stem, root, flower, silique, and leaves, and enhanced dramatically in senescence leaf.

Its subcellular location is the cell membrane. In terms of biological role, collaborates with REM4.2 to positively regulate the BCTV and BSCTV susceptibility. The protein is Remorin 4.1 of Arabidopsis thaliana (Mouse-ear cress).